The chain runs to 171 residues: Tetratricopeptide repeat protein 9C (171 aa).

TPR repeat units follow at residues 8-41 (AQLY…LRGL), 72-107 (TDCY…QPDN), and 108-141 (AKAL…KPKD).

Belongs to the TTC9 family.

The chain is Tetratricopeptide repeat protein 9C (TTC9C) from Bos taurus (Bovine).